We begin with the raw amino-acid sequence, 178 residues long: MSEHKGPTGAMVDPESLPYRPCVGLMVLNKAGLVWAGRRIVIPGDEMDGATQLWQMPQGGIDKGEDPAQAALRELYEETGMTSVSLLEEASDWINYDLPPHLMGLALKGKYRGQTQKWFAYRFEGDESEIAINPPPGGHTAEFDCWEWKPMADLPNLIVPFKRKVYEQVVATFRHLAA.

A Nudix hydrolase domain is found at Pro18–Ala171. Residues Gly59–Gly80 carry the Nudix box motif.

It belongs to the Nudix hydrolase family. RppH subfamily. A divalent metal cation serves as cofactor.

Accelerates the degradation of transcripts by removing pyrophosphate from the 5'-end of triphosphorylated RNA, leading to a more labile monophosphorylated state that can stimulate subsequent ribonuclease cleavage. This Brucella abortus (strain 2308) protein is RNA pyrophosphohydrolase.